Here is a 70-residue protein sequence, read N- to C-terminus: Large ribosomal subunit protein bL31 (70 aa).

Zn(2+)-binding residues include C16, C18, C38, and C41.

This sequence belongs to the bacterial ribosomal protein bL31 family. Type A subfamily. Part of the 50S ribosomal subunit. It depends on Zn(2+) as a cofactor.

Its function is as follows. Binds the 23S rRNA. This Bifidobacterium longum (strain DJO10A) protein is Large ribosomal subunit protein bL31.